The following is a 192-amino-acid chain: NADH-ubiquinone oxidoreductase subunit 9 (192 aa).

Belongs to the complex I 30 kDa subunit family. Complex I is composed of about 30 different subunits.

It localises to the mitochondrion inner membrane. The catalysed reaction is a ubiquinone + NADH + 5 H(+)(in) = a ubiquinol + NAD(+) + 4 H(+)(out). Core subunit of the mitochondrial membrane respiratory chain NADH dehydrogenase (Complex I) that is believed to belong to the minimal assembly required for catalysis. Complex I functions in the transfer of electrons from NADH to the respiratory chain. The immediate electron acceptor for the enzyme is believed to be ubiquinone. The protein is NADH-ubiquinone oxidoreductase subunit 9 (NAD9) of Prototheca wickerhamii.